The following is a 113-amino-acid chain: Large ribosomal subunit protein bL19 (113 aa).

The protein belongs to the bacterial ribosomal protein bL19 family.

This protein is located at the 30S-50S ribosomal subunit interface and may play a role in the structure and function of the aminoacyl-tRNA binding site. The polypeptide is Large ribosomal subunit protein bL19 (Mycobacterium sp. (strain JLS)).